The chain runs to 426 residues: 6-Hydroxy-7-prenyldeoxybrevianamide E synthase notC (426 aa).

Glu94 contributes to the substrate binding site. Arg105, Lys191, and Tyr193 together coordinate dimethylallyl diphosphate. Residue Tyr195 participates in substrate binding. Lys267, Tyr269, Gln352, Tyr354, Tyr418, and Tyr422 together coordinate dimethylallyl diphosphate.

This sequence belongs to the tryptophan dimethylallyltransferase family.

The catalysed reaction is 6-hydroxydeoxybrevianamide E + dimethylallyl diphosphate = notoamide S + diphosphate. It functions in the pathway alkaloid biosynthesis. Addition of 5 mM Mg(2+), Ca(2+) or Mn(2+) slightly enhances catalysis (about 100-120%). Significant reduction of enzyme activity (2%-35%) is observed with Cu(2+), Zn(2+), Fe(2+), or Sn(2+) (5 mM). Functionally, prenyltransferase; part of the gene cluster that mediates the biosynthesis of notoamide, a fungal indole alkaloid that belongs to a family of natural products containing a characteristic bicyclo[2.2.2]diazaoctane core. The first step of notoamide biosynthesis involves coupling of L-proline and L-tryptophan by the bimodular NRPS notE, to produce cyclo-L-tryptophan-L-proline called brevianamide F. The reverse prenyltransferase notF then acts as a deoxybrevianamide E synthase and converts brevianamide F to deoxybrevianamide E via reverse prenylation at C-2 of the indole ring leading to the bicyclo[2.2.2]diazaoctane core. Deoxybrevianamide E is further hydroxylated at C-6 of the indole ring, likely catalyzed by the cytochrome P450 monooxygenase notG, to yield 6-hydroxy-deoxybrevianamide E. 6-hydroxy-deoxybrevianamide E is a specific substrate of the prenyltransferase notC for normal prenylation at C-7 to produce 6-hydroxy-7-prenyl-deoxybrevianamide, also called notoamide S. As the proposed pivotal branching point in notoamide biosynthesis, notoamide S can be diverted to notoamide E through an oxidative pyran ring closure putatively catalyzed by either notH cytochrome P450 monooxygenase or the notD FAD-linked oxidoreductase. This step would be followed by an indole 2,3-epoxidation-initiated pinacol-like rearrangement catalyzed by the notB FAD-dependent monooxygenase leading to the formation of notoamide C and notoamide D. On the other hand notoamide S is converted to notoamide T by notH (or notD), a bifunctional oxidase that also functions as the intramolecular Diels-Alderase responsible for generation of (+)-notoamide T. To generate antipodal (-)-notoaminide T, notH' (or notD') in Aspergillus versicolor is expected to catalyze a Diels-Alder reaction leading to the opposite stereochemistry. The remaining oxidoreductase notD (or notH) likely catalyzes the oxidative pyran ring formation to yield (+)-stephacidin A. The FAD-dependent monooxygenase notI is highly similar to notB and is predicted to catalyze a similar conversion from (+)-stephacidin A to (-)-notoamide B via the 2,3-epoxidation of (+)-stephacidin A followed by a pinacol-type rearrangement. Finally, it remains unclear which enzyme could be responsible for the final hydroxylation steps leading to notoamide A and sclerotiamide. This Aspergillus sp. (strain MF297-2) protein is 6-Hydroxy-7-prenyldeoxybrevianamide E synthase notC.